Here is a 210-residue protein sequence, read N- to C-terminus: Small ribosomal subunit protein uS3 (210 aa).

One can recognise a KH type-2 domain in the interval 38–106; the sequence is LKSFLKKRLY…EVYLNIQEVR (69 aa).

It belongs to the universal ribosomal protein uS3 family. In terms of assembly, part of the 30S ribosomal subunit. Forms a tight complex with proteins S10 and S14.

Functionally, binds the lower part of the 30S subunit head. Binds mRNA in the 70S ribosome, positioning it for translation. This chain is Small ribosomal subunit protein uS3, found in Geotalea daltonii (strain DSM 22248 / JCM 15807 / FRC-32) (Geobacter daltonii).